A 182-amino-acid polypeptide reads, in one-letter code: Large ribosomal subunit protein uL13 (182 aa).

This sequence belongs to the universal ribosomal protein uL13 family. Part of the 50S ribosomal subunit.

Its function is as follows. This protein is one of the early assembly proteins of the 50S ribosomal subunit, although it is not seen to bind rRNA by itself. It is important during the early stages of 50S assembly. The protein is Large ribosomal subunit protein uL13 of Pyrobaculum neutrophilum (strain DSM 2338 / JCM 9278 / NBRC 100436 / V24Sta) (Thermoproteus neutrophilus).